The following is a 600-amino-acid chain: Elongation factor 4 (600 aa).

The tr-type G domain maps to 4–186 (KNVRNFCIIA…AIVNRIPPPK (183 aa)). Residues 16–21 (DHGKST) and 133–136 (NKID) contribute to the GTP site.

This sequence belongs to the TRAFAC class translation factor GTPase superfamily. Classic translation factor GTPase family. LepA subfamily.

It localises to the cell inner membrane. The catalysed reaction is GTP + H2O = GDP + phosphate + H(+). In terms of biological role, required for accurate and efficient protein synthesis under certain stress conditions. May act as a fidelity factor of the translation reaction, by catalyzing a one-codon backward translocation of tRNAs on improperly translocated ribosomes. Back-translocation proceeds from a post-translocation (POST) complex to a pre-translocation (PRE) complex, thus giving elongation factor G a second chance to translocate the tRNAs correctly. Binds to ribosomes in a GTP-dependent manner. In Aquifex aeolicus (strain VF5), this protein is Elongation factor 4.